The primary structure comprises 1221 residues: Fibulin-2 (1221 aa).

Residues 1 to 26 form the signal peptide; it reads MLLQESAGVWLALALVTALTPSPSMA. Residues 27-176 are subdomain NA (Cys-rich); sequence VPWQDCTGAE…ELICYQLPGC (150 aa). Positions 27–434 are n; it reads VPWQDCTGAE…DGSTKDLIET (408 aa). The tract at residues 177–434 is subdomain NB (Cys-free); sequence HGNFSDAEEG…DGSTKDLIET (258 aa). N-linked (GlcNAc...) asparagine glycosylation is present at Asn179. Disordered regions lie at residues 248–329 and 341–399; these read PTAA…LIPD and GAAP…PQHP. Residues 270-283 show a composition bias toward acidic residues; the sequence is DTEEDEEEEEEETL. A compositionally biased stretch (basic and acidic residues) spans 312-322; the sequence is QEKEAEAKAGP. A Cell attachment site motif is present at residues 421-423; it reads RGD. 11 disulfides stabilise this stretch: Cys435–Cys462, Cys436–Cys469, Cys449–Cys470, Cys479–Cys508, Cys492–Cys509, Cys511–Cys535, Cys512–Cys542, Cys525–Cys543, Cys598–Cys610, Cys606–Cys619, and Cys621–Cys634. Anaphylatoxin-like domains are found at residues 435–477, 478–510, and 511–543; these read CCAA…LKEK, SCVA…QCCD, and CCGL…LSCC. Asn497 carries an N-linked (GlcNAc...) asparagine glycan. The EGF-like 1; calcium-binding domain maps to 594–635; the sequence is DQDECLMLPGELCQHLCINTVGSYRCACFPGFELQGDGRTCR. The segment at 633–661 is disordered; it reads TCRPDRGAPQLDTARESAPRSESAQVSPN. Over residues 652–661 the composition is skewed to polar residues; sequence RSESAQVSPN. In terms of domain architecture, EGF-like 2 spans 669–708; the sequence is QPNTCKDNGPCRQVCRVVGDTAMCSCFPGYAIMADGVSCE. Disulfide bonds link Cys673–Cys683, Cys679–Cys692, Cys694–Cys707, Cys713–Cys726, and Cys720–Cys735. One can recognise an EGF-like 3; calcium-binding domain in the interval 709-755; that stretch reads DQDECLMGTHDCSWKQFCVNTLGSFYCVNHTVLCAEGYILNAHRKCV. Residue Asn737 is glycosylated (N-linked (GlcNAc...) asparagine). A disulfide bridge links Cys742 with Cys754. The region spanning 756-800 is the EGF-like 4; calcium-binding domain; it reads DINECVTDLHTCTRAEHCVNTPGSFQCYKALTCEPGYVLTDGECT. The 46-residue stretch at 801-846 folds into the EGF-like 5; calcium-binding domain; that stretch reads DVDECVTGTHNCQAGFSCQNTKGSFYCQARQRCMDGFLQDPEGNCV. Intrachain disulfides connect Cys805–Cys818, Cys812–Cys827, and Cys833–Cys845. An EGF-like 6; calcium-binding domain is found at 847–894; it reads DINECTSLLEPCRSGFSCINTVGSYTCQRNPLVCGRGYHANEEGSECV. One can recognise an EGF-like 7; calcium-binding domain in the interval 895 to 937; sequence DVNECETGVHRCGEGQLCYNLPGSYRCDCKPGFQRDAFGRTCI. Cystine bridges form between Cys899–Cys912, Cys906–Cys921, Cys923–Cys936, Cys942–Cys954, Cys950–Cys963, Cys965–Cys978, Cys984–Cys993, Cys989–Cys1002, Cys1004–Cys1017, Cys1023–Cys1035, Cys1031–Cys1044, Cys1046–Cys1060, Cys1066–Cys1079, Cys1073–Cys1088, and Cys1093–Cys1105. Residues 938–979 enclose the EGF-like 8; calcium-binding domain; that stretch reads DVNECWVSPGRLCQHTCENTPGSYRCSCAAGFLLAADGKHCE. The region spanning 980 to 1018 is the EGF-like 9; calcium-binding domain; that stretch reads DVNECETRRCSQECANIYGSYQCYCRQGYQLAEDGHTCT. The EGF-like 10; calcium-binding domain maps to 1019 to 1061; sequence DIDECAQGAGILCTFRCVNVPGSYQCACPEQGYTMMANGRSCK. Residues 1062–1106 enclose the EGF-like 11; calcium-binding domain; sequence DLDECALGTHNCSEAETCHNIQGSFRCLRFDCPPNYVRVSETKCE. Asn1072 carries an N-linked (GlcNAc...) asparagine glycan. The domain III stretch occupies residues 1111 to 1221; sequence QDITECQTSP…MYIFFTTFAP (111 aa).

This sequence belongs to the fibulin family. Homotrimer; disulfide-linked. Interacts with LAMA2. Interacts with FBN1 (via N-terminal domain). Forms a ternary complex with ELN and FBN1. Component of both basement membranes and other connective tissues.

The protein resides in the secreted. Its subcellular location is the extracellular space. It localises to the extracellular matrix. Functionally, its binding to fibronectin and some other ligands is calcium dependent. May act as an adapter that mediates the interaction between FBN1 and ELN. This chain is Fibulin-2 (Fbln2), found in Mus musculus (Mouse).